Reading from the N-terminus, the 237-residue chain is Cysteine-rich venom protein ENH2 (237 aa).

The N-terminal stretch at 1-18 (MIVFILLSLAAVLQQFVA) is a signal peptide. An SCP domain is found at 37–165 (VDMHNSFRRS…PYNYFYVCQY (129 aa)). Disulfide bonds link Cys-74/Cys-152, Cys-91/Cys-166, Cys-147/Cys-163, Cys-185/Cys-192, Cys-188/Cys-197, Cys-210/Cys-228, and Cys-219/Cys-232. The ShKT domain occupies 201 to 237 (CPITNTFTNCDSLLQQNSCEDSYIKTNCGASCFGQDK).

It belongs to the CRISP family. As to expression, expressed by the venom gland.

The protein resides in the secreted. Functionally, blocks contraction of smooth muscle elicited by high potassium-induced depolarization, but does not block caffeine-stimulated contraction. May target voltage-gated calcium channels on smooth muscle. The chain is Cysteine-rich venom protein ENH2 from Pseudoferania polylepis (Macleay's water snake).